The following is a 276-amino-acid chain: L-aminoadipate-semialdehyde dehydrogenase-phosphopantetheinyl transferase (276 aa).

This sequence belongs to the P-Pant transferase superfamily. AcpS family.

The catalysed reaction is apo-[ACP] + CoA = holo-[ACP] + adenosine 3',5'-bisphosphate + H(+). Its function is as follows. Catalyzes the transfer of a 4'-phosphopantetheine moiety from coenzyme A to a serine residue of acceptor proteins, such as alpha-aminoadipate reductase. Necessary for alpha-aminoadipate reductase activity. The protein is L-aminoadipate-semialdehyde dehydrogenase-phosphopantetheinyl transferase (LYS5) of Eremothecium gossypii (strain ATCC 10895 / CBS 109.51 / FGSC 9923 / NRRL Y-1056) (Yeast).